The sequence spans 496 residues: Fibronectin type III and SPRY domain-containing protein 1 (496 aa).

The stretch at 4–99 forms a coiled coil; that stretch reads QREALRKIIT…ALESSEELLE (96 aa). The COS domain maps to 105 to 162; the sequence is LQAMDREDFPQAAKQIKDGVTMAPAFRLSLKAKVSDNMSHLMVDFAQERQMLQALKFL. The Fibronectin type-III domain occupies 164–268; sequence VPSAPVIDLA…EPVTLETPAF (105 aa). Positions 268–477 constitute a B30.2/SPRY domain; the sequence is FMFRLDASTS…VTTGLQVPSS (210 aa). The segment at 301–336 is disordered; it reads KAREKDGKGRTASPINSPARGTPSPKRMPSGRGGRD. Omega-N-methylarginine occurs at positions 310 and 320.

Oligomerization is required for binding to microtubules.

The protein resides in the cytoplasm. It is found in the cytoskeleton. It localises to the microtubule organizing center. The protein localises to the centrosome. Its subcellular location is the nucleus. The protein resides in the cleavage furrow. In terms of biological role, may be involved in microtubule organization and stabilization. The chain is Fibronectin type III and SPRY domain-containing protein 1 (FSD1) from Macaca fascicularis (Crab-eating macaque).